A 1909-amino-acid chain; its full sequence is MCHAAQETPLLHHFMAPVMARWPPFGLCLLLLLLSPPPLPLTGAHRFSAPNTTLNHLALAPGRGTLYVGAVNRLFQLSPELQLEAVAVTGPVIDSPDCVPFRDPAECPQAQLTDNANQLLLVSSRAQELVACGQVRQGVCETRRLGDVAEVLYQAEDPGDGQFVAANTPGVATVGLVVPLPGRDLLLVARGLAGKLSAGVPPLAIRQLAGSQPFSSEGLGRLVVGDFSDYNNSYVGAFADARSAYFVFRRRGARAQAEYRSYVARVCLGDTNLYSYVEVPLACQGQGLIQAAFLAPGTLLGVFAAGPRGTQAALCAFPMVELGASMEQARRLCYTAGGRGPSGAEEATVEYGVTSRCVTLPLDSPESYPCGDEHTPSPIAGRQPLEVQPLLKLGQPVSAVAALQADGHMIAFLGDTQGQLYKVFLHGSQGQVYHSQQVGPPGSAISPDLLLDSSGSHLYVLTAHQVDRIPVAACPQFPDCASCLQAQDPLCGWCVLQGRCTRKGQCGRAGQLNQWLWSYEEDSHCLHIQSLLPGHHPRQEQGQVTLSVPRLPILDADEYFHCAFGDYDSLAHVEGPHVACVTPPQDQVPLNPPGTDHVTVPLALMFEDVTVAATNFSFYDCSAVQALEAAAPCRACVGSIWRCHWCPQSSHCVYGEHCPEGERTIYSAQEVDIQVRGPGACPQVEGLAGPHLVPVGWESHLALRVRNLQHFRGLPASFHCWLELPGELRGLPATLEETAGDSGLIHCQAHQFYPSMSQRELPVPIYVTQGEAQRLDNTHALYVILYDCAMGHPDCSHCQAANRSLGCLWCADGQPACRYGPLCPPGAVELLCPAPSIDAVEPLTGPPEGGLALTILGSNLGRAFADVQYAVSVASRPCNPEPSLYRTSARIVCVTSPAPNGTTGPVRVAIKSQPPGISSQHFTYQDPVLLSLSPRWGPQAGGTQLTIRGQHLQTGGNTSAFVGGQPCPILEPVCPEAIVCRTRPQAAPGEAAVLVVFGHAQRTLLASPFRYTANPQLVAAEPSASFRGGGRLIRVRGTGLDVVQRPLLSVWLEADAEVQASRAQPQDPQPRRSCGAPAADPQACIQLGGGLLQCSTVCSVNSSSLLLCRSPAVPDRAHPQRVFFTLDNVQVDFASASGGQGFLYQPNPRLAPLSREGPARPYRLKPGHVLDVEGEGLNLGISKEEVRVHIGRGECLVKTLTRTHLYCEPPAHAPQPANGSGLPQFVVQMGNVQLALGPVQYEAEPPLSAFPVEAQAGVGMGAAVLIAAVLLLTLMYRHKSKQALRDYQKVLVQLESLETGVGDQCRKEFTDLMTEMTDLSSDLEGSGIPFLDYRTYAERAFFPGHGGCPLQPKPEGPGEDGHCATVRQGLTQLSNLLNSKLFLLTLIHTLEEQPSFSQRDRCHVASLLSLALHGKLEYLTDIMRTLLGDLAAHYVHRNPKLMLRRTETMVEKLLTNWLSICLYAFLREVAGEPLYMLFRAIQYQVDKGPVDAVTGKAKRTLNDSRLLREDVEFQPLTLMVLVGPGAGGAAGSSEMQRVPARVLDTDTITQVKEKVLDQVYKGTPFSQRPSVHALDLEWRSGLAGHLTLSDEDLTSVTQNHWKRLNTLQHYKVPDGATVGLVPQLHRGSTISQSLAQRCPLGENIPTLEDGEEGGVCLWHLVKATEEPEGAKVRCSSLREREPARAKAIPEIYLTRLLSMKGTLQKFVDDTFQAILSVNRPIPIAVKYLFDLLDELAEKHGIEDPGTLHIWKTNSLLLRFWVNALKNPQLIFDVRVSDNVDAILAVIAQTFIDSCTTSEHKVGRDSPVNKLLYAREIPRYKQMVERYYADIRQSSPASYQEMNSALAELSGNYTSAPHCLEALQELYNHIHRYYDQIISALEEDPVGQKLQLACRLQQVAALVENKVTDL.

The first 44 residues, 1 to 44, serve as a signal peptide directing secretion; the sequence is MCHAAQETPLLHHFMAPVMARWPPFGLCLLLLLLSPPPLPLTGA. The 427-residue stretch at 45 to 471 folds into the Sema domain; it reads HRFSAPNTTL…TAHQVDRIPV (427 aa). At 45 to 1255 the chain is on the extracellular side; it reads HRFSAPNTTL…PLSAFPVEAQ (1211 aa). Asn-51 is a glycosylation site (N-linked (GlcNAc...) asparagine). 2 cysteine pairs are disulfide-bonded: Cys-98–Cys-107 and Cys-132–Cys-140. An N-linked (GlcNAc...) asparagine glycan is attached at Asn-231. 8 disulfides stabilise this stretch: Cys-267–Cys-370, Cys-283–Cys-315, Cys-333–Cys-357, Cys-474–Cys-491, Cys-480–Cys-525, Cys-483–Cys-500, Cys-494–Cys-506, and Cys-562–Cys-580. In terms of domain architecture, PSI 1 spans 473–526; sequence ACPQFPDCASCLQAQDPLCGWCVLQGRCTRKGQCGRAGQLNQWLWSYEEDSHCL. Asn-615 carries an N-linked (GlcNAc...) asparagine glycan. PSI domains follow at residues 620-682 and 787-833; these read DCSA…GACP and DCAM…LLCP. 5 N-linked (GlcNAc...) asparagine glycosylation sites follow: Asn-802, Asn-900, Asn-957, Asn-1101, and Asn-1218. IPT/TIG domains lie at 835 to 925, 927 to 1012, 1015 to 1145, and 1159 to 1244; these read PSID…FTYQ, PVLL…FRYT, PQLV…FLYQ, and ARPY…YEAE. The helical transmembrane segment at 1256-1276 threads the bilayer; sequence AGVGMGAAVLIAAVLLLTLMY. Topologically, residues 1277–1909 are cytoplasmic; the sequence is RHKSKQALRD…ALVENKVTDL (633 aa).

It belongs to the plexin family. As to quaternary structure, interacts (via cytoplasmic domain) with RAC1 and ARHGDIA. Binds MET and MST1R. Interacts (via cytoplasmic domain) with FSCN1. Interacts with RIT2/RIN. May form homodimers (via Sema domain). As to expression, expression detected in Purkinje and granular cells in cerebellum, and in brain neocortex but not in corpus callosum. Expressed in glioma cells and embryonic kidney cells (at protein level). Expressed in brain, liver, pancreas and placenta, with weak expression detected also in lung and kidney. Expressed in several glioma cell lines.

Its subcellular location is the cell membrane. In terms of biological role, receptor for SEMA5A that plays a role in axon guidance, invasive growth and cell migration. Stimulates neurite outgrowth and mediates Ca(2+)/Mg(2+)-dependent cell aggregation. In glioma cells, SEMA5A stimulation of PLXNB3 results in the disassembly of F-actin stress fibers, disruption of focal adhesions and cellular collapse as well as inhibition of cell migration and invasion through ARHGDIA-mediated inactivation of RAC1. This chain is Plexin-B3 (PLXNB3), found in Homo sapiens (Human).